Reading from the N-terminus, the 406-residue chain is MASVWTDIRAVLPSTVSEFPLDFSEKIDLSVLKCLELSRDQLYSEADCPVSAERAQIIIDYSWEKLNIGTWRDVDKEWRRVYSYGCLFKVLSLCHGNPPQNIIQEAVRTCDMSLLMGAAIMDNILQRLVGILRNKIKTTCPNKAERSEEPFSKKRKHDCKSEPVLNPTKEVPRIHCPSLERFRSDFLDPKKPVIIEGITDLWPAFTQHPWSIDYLRTVAGCRTVPIEVGSKYTDEEWSQKLITVNDFIDRYITGTEEDGVGYLAQHQLFDQVPELKEDIRIPDYCCLGEGDEDDITINAWFGPGGTVSPLHQDPQQNFLAQVVGRKYIRLYSPEDTKSLYPHESQLLHNTSQVEVENPDLVKFPDFSRASYEECVLCPGDVLFIPLQHWYYVRSLELSFSVSFWWS.

Positions 143–152 are enriched in basic and acidic residues; that stretch reads KAERSEEPFS. The tract at residues 143-162 is disordered; sequence KAERSEEPFSKKRKHDCKSE. A JmjC domain is found at 270–406; the sequence is DQVPELKEDI…LSFSVSFWWS (137 aa). Residues His311 and Asp313 each contribute to the Fe cation site.

Requires Fe(2+) as cofactor.

Its subcellular location is the nucleus. The catalysed reaction is N(6),N(6)-dimethyl-L-lysyl(36)-[histone H3] + 2 2-oxoglutarate + 2 O2 = L-lysyl(36)-[histone H3] + 2 formaldehyde + 2 succinate + 2 CO2. Functionally, histone demethylase required for G2/M phase cell cycle progression. Specifically demethylates dimethylated 'Lys-36' (H3K36me2) of histone H3, an epigenetic repressive mark, thereby acting as a transcription activator. May play a role in the regulation of the circadian clock. The sequence is that of Lysine-specific demethylase 8 (kdm8) from Danio rerio (Zebrafish).